A 481-amino-acid polypeptide reads, in one-letter code: Threonine synthase (481 aa).

An N6-(pyridoxal phosphate)lysine modification is found at lysine 118.

The protein belongs to the threonine synthase family. In terms of assembly, monomer. The cofactor is pyridoxal 5'-phosphate.

The enzyme catalyses O-phospho-L-homoserine + H2O = L-threonine + phosphate. It participates in amino-acid biosynthesis; L-threonine biosynthesis; L-threonine from L-aspartate: step 5/5. Functionally, catalyzes the gamma-elimination of phosphate from L-phosphohomoserine and the beta-addition of water to produce L-threonine. This chain is Threonine synthase (thrC), found in Corynebacterium glutamicum (strain ATCC 13032 / DSM 20300 / JCM 1318 / BCRC 11384 / CCUG 27702 / LMG 3730 / NBRC 12168 / NCIMB 10025 / NRRL B-2784 / 534).